The primary structure comprises 248 residues: Probable transcriptional regulatory protein PSPA7_4544 (248 aa).

Belongs to the TACO1 family.

It localises to the cytoplasm. This Pseudomonas paraeruginosa (strain DSM 24068 / PA7) (Pseudomonas aeruginosa (strain PA7)) protein is Probable transcriptional regulatory protein PSPA7_4544.